Reading from the N-terminus, the 572-residue chain is MTDVERMVLRPNHEGEMCPVCGDRVSGYHYGLLTCESCKGFFKRTVQNKKQYQCSAEANCHVDRTCRKRCPSCRFQKCLTMGMKMEAVRADRMRGGRNKFGSFYKKDRAHRMQRNAMRVSTVQVPAVLGAQSQAQTFYQPPEHQVSSSTTDQNNQINYFDQTKIKTEYIKTEYDAHLQSPTLSSSTNQQLSVSDFIMRPGYLVDPQDSLAVLLGSTIDDPLLRHTFPAAYQLNEVKQEPFDYSEQFIHHSLHDYPTYTSNTTNYATMMPMTTVSSTQSLVTSTSSTTTGRMTEASSTSPILPLCPAPTEKTVDHFYNSSIAEMCKTLPDDAQIARIFTSVKGTSKPEKHAFSIQVAEENLKDIVIWAKNDQLFSKLSLDDQMILLQTSWTTVHIVDITNAMVHGNLLSQYKMSNGDEVPVGLVALLGNQTFVSSWNDVVIRLRNMGFTNFDYCAFRFLALFDQSMDSFPAVSTARSRVLQSWREVRCTTAFLEIFEQIRRLAYDSLRYLWNLHSNCPTNWEQFFPEASLVLEMIRTTVNRSASSSVTAITQVPAIQLPTPQATYTAVPYMAS.

Positions 15 to 90 (GEMCPVCGDR…MGMKMEAVRA (76 aa)) form a DNA-binding region, nuclear receptor. NR C4-type zinc fingers lie at residues 18-38 (CPVC…CESC) and 54-78 (CSAE…FQKC). Residues 307 to 567 (PTEKTVDHFY…PTPQATYTAV (261 aa)) enclose the NR LBD domain.

Belongs to the nuclear hormone receptor family. In terms of assembly, interacts with lin-39. Interacts with nob-1. Expressed in the epidermis, the developing somatic gonad, and a subset of other epithelial cells.

Its subcellular location is the nucleus. Its function is as follows. Orphan nuclear receptor and probable transcription activator, required during development. Plays a role in male tail tip morphogenesis regulating the expression of the transcription factor dmd-3 in a negative feedback loop. Regulates vulval precursor cell (VPC) differentiation, in concert with homeobox protein lin-39. Involved in promoting embryogenesis, in concert with homeobox protein nob-1. May play a role in modulation of lifespan and immunity. This is Nuclear hormone receptor family member nhr-25 from Caenorhabditis elegans.